A 201-amino-acid chain; its full sequence is Small ribosomal subunit protein uS4c (201 aa).

The 62-residue stretch at 89-150 folds into the S4 RNA-binding domain; that stretch reads MRLDNILFRL…KQRSKVLIQN (62 aa).

Belongs to the universal ribosomal protein uS4 family. As to quaternary structure, part of the 30S ribosomal subunit. Contacts protein S5. The interaction surface between S4 and S5 is involved in control of translational fidelity.

Its subcellular location is the plastid. It is found in the chloroplast. In terms of biological role, one of the primary rRNA binding proteins, it binds directly to 16S rRNA where it nucleates assembly of the body of the 30S subunit. Its function is as follows. With S5 and S12 plays an important role in translational accuracy. In Acorus calamus (Sweet flag), this protein is Small ribosomal subunit protein uS4c (rps4).